Reading from the N-terminus, the 354-residue chain is Guanine nucleotide-binding protein G(t) subunit alpha-2 (354 aa).

Residues Met-1–Ala-27 form a disordered region. A lipid anchor (N-myristoyl glycine) is attached at Gly-2. Residues Ala-7–Ala-27 show a composition bias toward basic and acidic residues. The G-alpha domain occupies Lys-32 to Phe-354. A G1 motif region spans residues Lys-35–Thr-48. Residues Gly-40–Ser-47, Leu-175–Thr-181, Asp-200–Gln-204, Asn-269–Asp-272, and Ala-326 each bind GTP. A Mg(2+)-binding site is contributed by Ser-47. A G2 motif region spans residues Asp-173–Thr-181. Arg-178 is modified (ADP-ribosylarginine; by cholera toxin). Thr-181 provides a ligand contact to Mg(2+). A G3 motif region spans residues Phe-196–Arg-205. The G4 motif stretch occupies residues Val-265–Asp-272. The G5 motif stretch occupies residues Thr-324–Thr-329. Cys-351 is modified (ADP-ribosylcysteine; by pertussis toxin).

The protein belongs to the G-alpha family. G(i/o/t/z) subfamily. As to quaternary structure, g proteins are composed of 3 units; alpha, beta and gamma. The alpha chain contains the guanine nucleotide binding site. In terms of tissue distribution, retinal rod outer segment.

It is found in the cell projection. It localises to the cilium. The protein localises to the photoreceptor outer segment. Its subcellular location is the photoreceptor inner segment. Its function is as follows. Guanine nucleotide-binding proteins (G proteins) are involved as modulators or transducers in various transmembrane signaling systems. Transducin is an amplifier and one of the transducers of a visual impulse that performs the coupling between rhodopsin and cGMP-phosphodiesterase. The protein is Guanine nucleotide-binding protein G(t) subunit alpha-2 (GNAT2) of Homo sapiens (Human).